A 360-amino-acid chain; its full sequence is Phospho-N-acetylmuramoyl-pentapeptide-transferase (360 aa).

10 helical membrane-spanning segments follow: residues 21 to 41, 71 to 91, 94 to 114, 142 to 162, 168 to 188, 199 to 219, 236 to 256, 263 to 283, 288 to 308, and 338 to 358; these read YLTF…LWIG, TPTM…ILWA, SNPY…IGFI, LVVA…VLVV, IMPQ…VGAS, GLAI…AWAT, ASEL…FLWF, VFMG…IAVL, FLLF…ILQV, and VIVR…VTLK.

It belongs to the glycosyltransferase 4 family. MraY subfamily. Mg(2+) serves as cofactor.

It is found in the cell inner membrane. The catalysed reaction is UDP-N-acetyl-alpha-D-muramoyl-L-alanyl-gamma-D-glutamyl-meso-2,6-diaminopimeloyl-D-alanyl-D-alanine + di-trans,octa-cis-undecaprenyl phosphate = di-trans,octa-cis-undecaprenyl diphospho-N-acetyl-alpha-D-muramoyl-L-alanyl-D-glutamyl-meso-2,6-diaminopimeloyl-D-alanyl-D-alanine + UMP. The protein operates within cell wall biogenesis; peptidoglycan biosynthesis. Its function is as follows. Catalyzes the initial step of the lipid cycle reactions in the biosynthesis of the cell wall peptidoglycan: transfers peptidoglycan precursor phospho-MurNAc-pentapeptide from UDP-MurNAc-pentapeptide onto the lipid carrier undecaprenyl phosphate, yielding undecaprenyl-pyrophosphoryl-MurNAc-pentapeptide, known as lipid I. The protein is Phospho-N-acetylmuramoyl-pentapeptide-transferase of Tolumonas auensis (strain DSM 9187 / NBRC 110442 / TA 4).